The sequence spans 592 residues: V-type ATP synthase alpha chain (592 aa).

232–239 (GPFGAGKT) provides a ligand contact to ATP.

This sequence belongs to the ATPase alpha/beta chains family.

The catalysed reaction is ATP + H2O + 4 H(+)(in) = ADP + phosphate + 5 H(+)(out). Its function is as follows. Produces ATP from ADP in the presence of a proton gradient across the membrane. The V-type alpha chain is a catalytic subunit. The chain is V-type ATP synthase alpha chain from Clostridium botulinum (strain Eklund 17B / Type B).